Consider the following 142-residue polypeptide: NTF2-related export protein 2 (142 aa).

Residues 17 to 136 (AAEEFVNIYY…WKIASDCFRF (120 aa)) form the NTF2 domain.

In terms of assembly, associates with NXF1, NXF2, NXF3 and NXF5.

Its subcellular location is the nucleus. It is found in the cytoplasm. Its function is as follows. Regulator of protein export for NES-containing proteins. Also plays a role in mRNA nuclear export. The protein is NTF2-related export protein 2 (NXT2) of Bos taurus (Bovine).